A 303-amino-acid chain; its full sequence is Taste receptor type 2 member 13 (303 aa).

The Extracellular portion of the chain corresponds to methionine 1 to serine 7. Residues isoleucine 8 to valine 28 form a helical membrane-spanning segment. At leucine 29 to arginine 55 the chain is on the cytoplasmic side. A helical membrane pass occupies residues isoleucine 56–phenylalanine 76. The Extracellular segment spans residues valine 77 to methionine 85. A helical membrane pass occupies residues isoleucine 86–phenylalanine 106. The Cytoplasmic segment spans residues tyrosine 107–glutamine 128. Residues valine 129–asparagine 149 form a helical membrane-spanning segment. Topologically, residues isoleucine 150 to threonine 184 are extracellular. N-linked (GlcNAc...) asparagine glycosylation occurs at asparagine 166. The helical transmembrane segment at methionine 185 to leucine 205 threads the bilayer. The Cytoplasmic portion of the chain corresponds to arginine 206–lysine 232. Residues isoleucine 233 to isoleucine 253 traverse the membrane as a helical segment. Over serine 254 to leucine 261 the chain is Extracellular. A helical transmembrane segment spans residues isoleucine 262 to isoleucine 282. Topologically, residues leucine 283–arginine 303 are cytoplasmic.

This sequence belongs to the G-protein coupled receptor T2R family.

Its subcellular location is the membrane. Its function is as follows. Receptor that may play a role in the perception of bitterness and is gustducin-linked. May play a role in sensing the chemical composition of the gastrointestinal content. The activity of this receptor may stimulate alpha gustducin, mediate PLC-beta-2 activation and lead to the gating of TRPM5. This is Taste receptor type 2 member 13 (TAS2R13) from Papio hamadryas (Hamadryas baboon).